Reading from the N-terminus, the 25-residue chain is Dermaseptin-5.1TR (25 aa).

Valine 25 carries the post-translational modification Valine amide.

As to expression, expressed by the skin glands.

It is found in the secreted. In terms of biological role, has antimicrobial activity. This is Dermaseptin-5.1TR from Phyllomedusa trinitatis (Trinidad leaf frog).